The chain runs to 156 residues: Ribosomal RNA large subunit methyltransferase H (156 aa).

S-adenosyl-L-methionine contacts are provided by residues L73, G104, and 123-128; that span reads LSALTL.

The protein belongs to the RNA methyltransferase RlmH family. In terms of assembly, homodimer.

Its subcellular location is the cytoplasm. The catalysed reaction is pseudouridine(1915) in 23S rRNA + S-adenosyl-L-methionine = N(3)-methylpseudouridine(1915) in 23S rRNA + S-adenosyl-L-homocysteine + H(+). Functionally, specifically methylates the pseudouridine at position 1915 (m3Psi1915) in 23S rRNA. The protein is Ribosomal RNA large subunit methyltransferase H of Shewanella pealeana (strain ATCC 700345 / ANG-SQ1).